The sequence spans 312 residues: Ribonuclease Z (312 aa).

Zn(2+) contacts are provided by His-61, His-63, Asp-65, His-66, His-148, Asp-216, and His-275. Asp-65 serves as the catalytic Proton acceptor.

It belongs to the RNase Z family. Homodimer. Zn(2+) serves as cofactor.

The enzyme catalyses Endonucleolytic cleavage of RNA, removing extra 3' nucleotides from tRNA precursor, generating 3' termini of tRNAs. A 3'-hydroxy group is left at the tRNA terminus and a 5'-phosphoryl group is left at the trailer molecule.. Zinc phosphodiesterase, which displays some tRNA 3'-processing endonuclease activity. Probably involved in tRNA maturation, by removing a 3'-trailer from precursor tRNA. This Clostridium tetani (strain Massachusetts / E88) protein is Ribonuclease Z.